Consider the following 105-residue polypeptide: Malonate decarboxylase acyl carrier protein (105 aa).

Serine 28 is subject to O-(phosphoribosyl dephospho-coenzyme A)serine.

The protein belongs to the MdcC family. Post-translationally, covalently binds the prosthetic group of malonate decarboxylase.

The protein resides in the cytoplasm. Its function is as follows. Subunit of malonate decarboxylase, it is an acyl carrier protein to which acetyl and malonyl thioester residues are bound via a 2'-(5''-phosphoribosyl)-3'-dephospho-CoA prosthetic group and turn over during the catalytic mechanism. In Xanthomonas campestris pv. campestris (strain 8004), this protein is Malonate decarboxylase acyl carrier protein.